A 472-amino-acid chain; its full sequence is uncharacterized protein (472 aa).

Belongs to the IIV-6 198R family.

This is an uncharacterized protein from Acheta domesticus (House cricket).